Consider the following 115-residue polypeptide: Large ribosomal subunit protein bL20 (115 aa).

The protein belongs to the bacterial ribosomal protein bL20 family.

Its function is as follows. Binds directly to 23S ribosomal RNA and is necessary for the in vitro assembly process of the 50S ribosomal subunit. It is not involved in the protein synthesizing functions of that subunit. This is Large ribosomal subunit protein bL20 from Prochlorococcus marinus (strain MIT 9303).